The primary structure comprises 145 residues: MIALIQRVTRASVTVEGEVTGEIGAGLLVLLGVEKDDDEQKANRLCERVLGYRIFSDAEGKMNLNVQQAGGSVLVVSQFTLAADTERGMRPSFSKGASPDRAEALYDYFVERCRQQEMNTQTGRFAADMQVSLVNDAPVTFWLQV.

This sequence belongs to the DTD family. Homodimer.

Its subcellular location is the cytoplasm. It carries out the reaction glycyl-tRNA(Ala) + H2O = tRNA(Ala) + glycine + H(+). The catalysed reaction is a D-aminoacyl-tRNA + H2O = a tRNA + a D-alpha-amino acid + H(+). An aminoacyl-tRNA editing enzyme that deacylates mischarged D-aminoacyl-tRNAs. Also deacylates mischarged glycyl-tRNA(Ala), protecting cells against glycine mischarging by AlaRS. Acts via tRNA-based rather than protein-based catalysis; rejects L-amino acids rather than detecting D-amino acids in the active site. By recycling D-aminoacyl-tRNA to D-amino acids and free tRNA molecules, this enzyme counteracts the toxicity associated with the formation of D-aminoacyl-tRNA entities in vivo and helps enforce protein L-homochirality. The sequence is that of Probable D-aminoacyl-tRNA deacylase from Shigella flexneri serotype 5b (strain 8401).